Consider the following 237-residue polypeptide: DNA repair protein RecO (237 aa).

It belongs to the RecO family.

Its function is as follows. Involved in DNA repair and RecF pathway recombination. This Rickettsia felis (strain ATCC VR-1525 / URRWXCal2) (Rickettsia azadi) protein is DNA repair protein RecO.